The sequence spans 574 residues: uncharacterized protein (574 aa).

The interval 297–327 (STASKSKKRRKDEVSGAQRNSSPLPQDAVSS) is disordered. Over residues 313–327 (AQRNSSPLPQDAVSS) the composition is skewed to polar residues.

This is an uncharacterized protein from Macaca fascicularis (Crab-eating macaque).